A 557-amino-acid polypeptide reads, in one-letter code: uncharacterized protein (557 aa).

The interval 17-38 (NSAEFSIHSTSNPTNPEEPNIT) is disordered. 9 helical membrane passes run 60-80 (LSLF…PSVA), 94-114 (GLLW…LSMA), 214-234 (SVGT…ILAM), 261-281 (FAIL…DAPF), 297-317 (GIIL…IVIA), 348-368 (LGIL…NLIA), 407-427 (VIGV…GAVF), 468-488 (IGFC…FPSV), and 498-518 (WTCL…AISG).

This sequence belongs to the amino acid-polyamine-organocation (APC) superfamily.

The protein resides in the membrane. This is an uncharacterized protein from Schizosaccharomyces pombe (strain 972 / ATCC 24843) (Fission yeast).